The chain runs to 974 residues: Ovochymase-2 (974 aa).

The signal sequence occupies residues 1–21 (MAETSIFPIMMLTVMIGVGRG). The propeptide at 22–49 (VTDSPGRVSRCGERPAANTSVSYGLLSR) is activation peptide. Residue Asn-39 is glycosylated (N-linked (GlcNAc...) asparagine). One can recognise a Peptidase S1 1 domain in the interval 50-299 (IVGGTSAVKG…LLNWLSENLN (250 aa)). Cysteines 75 and 91 form a disulfide. The active-site Charge relay system is the His-90. Positions 112 and 117 each coordinate Ca(2+). Asp-140 (charge relay system) is an active-site residue. Cystine bridges form between Cys-174–Cys-244, Cys-205–Cys-223, Cys-234–Cys-263, Cys-312–Cys-342, Cys-369–Cys-388, Cys-435–Cys-462, Cys-489–Cys-510, Cys-615–Cys-631, Cys-713–Cys-776, Cys-741–Cys-754, and Cys-766–Cys-795. The active-site Charge relay system is the Ser-238. CUB domains lie at 312 to 425 (CSTN…YEAV) and 435 to 547 (CGSV…ISFV). A Peptidase S1 2 domain is found at 590-819 (LIKAEEAMPN…FIPWIMETIL (230 aa)). Residues 590–974 (LIKAEEAMPN…WLSYSFHNQN (385 aa)) constitute a propeptide, activation peptide. Residue Asn-763 is glycosylated (N-linked (GlcNAc...) asparagine). The segment at 830–858 (EPHHPLFPPDKPSQQKALLPDSPPSSSSQ) is disordered. A glycan (N-linked (GlcNAc...) asparagine) is linked at Asn-926.

It belongs to the peptidase S1 family. The catalytically inactive 107 kDa form is processed both N- and C-terminally to give rise to the 66 kDa catalytically active form and inactive forms of 82 kDa and 59 kDa. Expressed specifically in the cells lining the bottom of epithelial folds in the oviductal pars recta.

Its subcellular location is the secreted. The enzyme catalyses Preferential cleavage at 371-Gly-Ser-Arg-|-Trp-374 of glycoprotein gp43 in Xenopus laevis coelemic egg envelope to yield gp41.. Its function is as follows. Mediates gamete interaction by affecting the vitelline coat. This is Ovochymase-2 (OVCH2) from Bufo japonicus (Japanese common toad).